We begin with the raw amino-acid sequence, 274 residues long: Protein TIFY 11A (274 aa).

Disordered regions lie at residues 49–95 (SLAL…SQPG) and 139–176 (PIND…QEQN). Residues 92–127 (SQPGSSQLTIFFGGKVLVYNEFPVDKAKEIMEVAKQ) enclose the Tify domain. Residues 139–150 (PINDENNNNKSS) are compositionally biased toward polar residues. Residues 161-185 (DNNHLTKEQQQQQEQNQIVERIARR) adopt a coiled-coil conformation. The Jas motif lies at 182–206 (IARRASLHRFFAKRKDRAVARAPYQ). Residues 183 to 190 (ARRASLHR) carry the Nuclear localization signal motif. Residues 206–274 (QVNQNAGHHR…QSSKDLDLRL (69 aa)) form a disordered region. The span at 249-274 (IKSDGDKDDIMKIEEGQSSKDLDLRL) shows a compositional bias: basic and acidic residues.

This sequence belongs to the TIFY/JAZ family. Homo- and heterodimer. Interacts with MYC2, MYC3, MYC4, AFPH2/NINJA, TIFY10A/JAZ1, TIFY10B/JAZ2, TIFY11B/JAZ6, TIFY5A/JAZ8 and TIFY3B/JAZ12. As to quaternary structure, (Microbial infection) Interacts with the pathogenic Pseudomonas syringae HopZ1a protein. In terms of processing, (Microbial infection) Acetylated by Pseudomonas syringae HopZ1a. Post-translationally, ubiquitinated. Targeted for degradation by the SCF(COI1) E3 ubiquitin ligase-proteasome pathway during jasmonate signaling.

It localises to the nucleus. In terms of biological role, repressor of jasmonate responses. This is Protein TIFY 11A from Arabidopsis thaliana (Mouse-ear cress).